The following is a 447-amino-acid chain: SPARC-related modular calcium-binding protein 2 (447 aa).

Positions methionine 1–alanine 21 are cleaved as a signal peptide. Residues glutamine 34 to aspartate 86 form the Kazal-like domain. 6 disulfide bridges follow: cysteine 40-cysteine 71, cysteine 44-cysteine 64, cysteine 53-cysteine 84, cysteine 90-cysteine 113, cysteine 124-cysteine 131, and cysteine 133-cysteine 153. A Thyroglobulin type-1 1 domain is found at valine 87–cysteine 153. Positions alanine 147–proline 230 are disordered. Positions valine 161–aspartate 172 are enriched in basic and acidic residues. Asparagine 206 carries N-linked (GlcNAc...) asparagine glycosylation. Over residues asparagine 206 to cysteine 216 the composition is skewed to polar residues. The Thyroglobulin type-1 2 domain occupies alanine 213–cysteine 281. 3 cysteine pairs are disulfide-bonded: cysteine 216-cysteine 240, cysteine 251-cysteine 258, and cysteine 260-cysteine 281. Residues aspartate 217–proline 230 are compositionally biased toward basic and acidic residues. 2 EF-hand domains span residues leucine 347–lysine 382 and lysine 384–glutamate 419. Residues aspartate 360, asparagine 362, serine 364, aspartate 366, glutamate 371, aspartate 397, asparagine 399, aspartate 401, serine 403, and glutamate 408 each contribute to the Ca(2+) site. N-linked (GlcNAc...) asparagine glycosylation occurs at asparagine 362. The interval threonine 416–glycine 447 is disordered.

In terms of assembly, binds various proteins from the extracellular matrix. N-glycosylated. As to expression, strongly expressed in ovary, followed by heart, muscle, spleen, brain, thymus, lung, liver, kidney, spleen, testis, ovary and skeletal muscle.

Its subcellular location is the secreted. It localises to the extracellular space. The protein resides in the extracellular matrix. The protein localises to the basement membrane. Can stimulate endothelial cell proliferation, migration, as well as angiogenesis. Promotes matrix assembly and cell adhesiveness. This Mus musculus (Mouse) protein is SPARC-related modular calcium-binding protein 2 (Smoc2).